The following is a 350-amino-acid chain: MTHCFIRALLRQPVERTPVWMMRQAGRYLPEYREVRERAGSFMNLCTSPELACEVTLQPLERYRLDAAILFSDILTVPDAMGLGLEFVEGEGPRFRNPIRGAADIHRLGVPDPEAELAYVPAAVRLIKQRLGDRAPLIGFSGSPWTLATYMVEGGSSREFRKVKCLMYEEPALMHELLEKLADAVALYLNAQIAAGVDAVMVFDTWGGNLDTEHYLAFSLRYAERVRQQLRLTGRGRIPAIFFTKGGGQWLEAMADAGYDALGLDWTTDIGSARQRVGDRVALQGNLDPVALYARPEIIRGEVRKILERYGRGSGHVFNLGHGVTPDIKPEHVGAMIEAVHEFSPAFHRT.

Residues 23-27, Asp-73, Tyr-150, Thr-205, and His-322 each bind substrate; that span reads RQAGR.

Belongs to the uroporphyrinogen decarboxylase family. In terms of assembly, homodimer.

The protein localises to the cytoplasm. It carries out the reaction uroporphyrinogen III + 4 H(+) = coproporphyrinogen III + 4 CO2. The protein operates within porphyrin-containing compound metabolism; protoporphyrin-IX biosynthesis; coproporphyrinogen-III from 5-aminolevulinate: step 4/4. Functionally, catalyzes the decarboxylation of four acetate groups of uroporphyrinogen-III to yield coproporphyrinogen-III. In Methylococcus capsulatus (strain ATCC 33009 / NCIMB 11132 / Bath), this protein is Uroporphyrinogen decarboxylase.